Here is a 567-residue protein sequence, read N- to C-terminus: uncharacterized protein (567 aa).

The tract at residues 1-26 (MPSEKATTRHLPGAVETLSPRTGRRP) is disordered. The next 6 helical transmembrane spans lie at 57–77 (AILVTNVIGLIVGAMLLTVAF), 90–110 (VSFGIVPGYCVLAFILGTYWL), 142–162 (VALAVLFLWGAAAALWTIIYG), 173–193 (LFSMGVIGVVAATSCYLLTEF), 221–241 (MLVWLLCSGVPNVGVALTAIF), and 257–277 (VLILWAPLLIFGFILMWILAW). One can recognise an HAMP domain in the interval 277–329 (WLTATPVRVVREALNRVEQGDLSGDLVVFDGTELGELQRGFNRMVEGLRERER). Positions 361-485 (AVVFVDIVGS…EPVNEAARLC (125 aa)) constitute a Guanylate cyclase domain.

Belongs to the adenylyl cyclase class-3 family.

The protein localises to the cell membrane. This is an uncharacterized protein from Mycobacterium bovis (strain ATCC BAA-935 / AF2122/97).